The primary structure comprises 356 residues: Dihydroorotate dehydrogenase (quinone) (356 aa).

FMN is bound by residues 67–71 (AGFDK) and threonine 91. Lysine 71 is a substrate binding site. 116 to 120 (NRMGF) lines the substrate pocket. Asparagine 153 and asparagine 186 together coordinate FMN. Asparagine 186 contributes to the substrate binding site. The Nucleophile role is filled by serine 189. Position 191 (asparagine 191) interacts with substrate. 2 residues coordinate FMN: lysine 228 and threonine 256. Substrate is bound at residue 257–258 (NT). FMN-binding positions include glycine 282, glycine 311, and 332–333 (YT).

The protein belongs to the dihydroorotate dehydrogenase family. Type 2 subfamily. Monomer. The cofactor is FMN.

It localises to the cell membrane. The catalysed reaction is (S)-dihydroorotate + a quinone = orotate + a quinol. Its pathway is pyrimidine metabolism; UMP biosynthesis via de novo pathway; orotate from (S)-dihydroorotate (quinone route): step 1/1. Its function is as follows. Catalyzes the conversion of dihydroorotate to orotate with quinone as electron acceptor. In Pseudarthrobacter chlorophenolicus (strain ATCC 700700 / DSM 12829 / CIP 107037 / JCM 12360 / KCTC 9906 / NCIMB 13794 / A6) (Arthrobacter chlorophenolicus), this protein is Dihydroorotate dehydrogenase (quinone).